A 42-amino-acid polypeptide reads, in one-letter code: Potassium channel toxin gamma-KTx 1.2 (42 aa).

4 disulfide bridges follow: Cys-5/Cys-23, Cys-11/Cys-34, Cys-20/Cys-39, and Cys-24/Cys-41.

Belongs to the ergtoxin family. Gamma-KTx 1 subfamily. As to expression, expressed by the venom gland.

The protein localises to the secreted. In terms of biological role, blocks Kv11/ERG potassium channels. The sequence is that of Potassium channel toxin gamma-KTx 1.2 from Centruroides elegans (Bark scorpion).